The primary structure comprises 150 residues: Mediator of RNA polymerase II transcription subunit 22a (150 aa).

Residues 99-127 (SLNDHVEQRIAEFDQEAEKTNRLLARIAD) adopt a coiled-coil conformation.

This sequence belongs to the Mediator complex subunit 22 family. As to quaternary structure, component of the Mediator complex.

It localises to the nucleus. Functionally, component of the Mediator complex, a coactivator involved in the regulated transcription of nearly all RNA polymerase II-dependent genes. Mediator functions as a bridge to convey information from gene-specific regulatory proteins to the basal RNA polymerase II transcription machinery. The Mediator complex, having a compact conformation in its free form, is recruited to promoters by direct interactions with regulatory proteins and serves for the assembly of a functional preinitiation complex with RNA polymerase II and the general transcription factors. The chain is Mediator of RNA polymerase II transcription subunit 22a (MED22A) from Arabidopsis thaliana (Mouse-ear cress).